The chain runs to 359 residues: Quinolinate synthase (359 aa).

Iminosuccinate-binding residues include histidine 81 and serine 99. Cysteine 144 contributes to the [4Fe-4S] cluster binding site. Iminosuccinate is bound by residues 170-172 and serine 187; that span reads YVN. A [4Fe-4S] cluster-binding site is contributed by cysteine 229. Iminosuccinate contacts are provided by residues 255-257 and threonine 272; that span reads HPE. A [4Fe-4S] cluster-binding site is contributed by cysteine 315.

This sequence belongs to the quinolinate synthase family. Type 2 subfamily. It depends on [4Fe-4S] cluster as a cofactor.

It localises to the cytoplasm. It catalyses the reaction iminosuccinate + dihydroxyacetone phosphate = quinolinate + phosphate + 2 H2O + H(+). It functions in the pathway cofactor biosynthesis; NAD(+) biosynthesis; quinolinate from iminoaspartate: step 1/1. Catalyzes the condensation of iminoaspartate with dihydroxyacetone phosphate to form quinolinate. The chain is Quinolinate synthase from Sinorhizobium medicae (strain WSM419) (Ensifer medicae).